The sequence spans 293 residues: Signal recognition particle receptor FtsY (293 aa).

GTP-binding positions include 93-100 (GVNGAGKT), 175-179 (DTAGR), and 239-242 (TKLD).

This sequence belongs to the GTP-binding SRP family. FtsY subfamily. In terms of assembly, part of the signal recognition particle protein translocation system, which is composed of SRP and FtsY. SRP is a ribonucleoprotein composed of Ffh and a 4.5S RNA molecule.

It is found in the cell inner membrane. Its subcellular location is the cytoplasm. The catalysed reaction is GTP + H2O = GDP + phosphate + H(+). Involved in targeting and insertion of nascent membrane proteins into the cytoplasmic membrane. Acts as a receptor for the complex formed by the signal recognition particle (SRP) and the ribosome-nascent chain (RNC). Interaction with SRP-RNC leads to the transfer of the RNC complex to the Sec translocase for insertion into the membrane, the hydrolysis of GTP by both Ffh and FtsY, and the dissociation of the SRP-FtsY complex into the individual components. This Helicobacter pylori (strain ATCC 700392 / 26695) (Campylobacter pylori) protein is Signal recognition particle receptor FtsY.